The following is a 291-amino-acid chain: ATP synthase gamma chain (291 aa).

Belongs to the ATPase gamma chain family. As to quaternary structure, F-type ATPases have 2 components, CF(1) - the catalytic core - and CF(0) - the membrane proton channel. CF(1) has five subunits: alpha(3), beta(3), gamma(1), delta(1), epsilon(1). CF(0) has three main subunits: a, b and c.

Its subcellular location is the cell inner membrane. Functionally, produces ATP from ADP in the presence of a proton gradient across the membrane. The gamma chain is believed to be important in regulating ATPase activity and the flow of protons through the CF(0) complex. The protein is ATP synthase gamma chain of Cupriavidus pinatubonensis (strain JMP 134 / LMG 1197) (Cupriavidus necator (strain JMP 134)).